The sequence spans 110 residues: SOSS complex subunit C (110 aa).

The protein belongs to the SOSS-C family. Belongs to the multiprotein complex Integrator. Component of the SOSS complex, composed of soss-b (soss-b1/nabp2 or soss-b2/nabp1), soss-a/ints3 and soss-c/inip.

Its subcellular location is the nucleus. Component of the SOSS complex, a multiprotein complex that functions downstream of the MRN complex to promote DNA repair and G2/M checkpoint. The SOSS complex associates with single-stranded DNA at DNA lesions and influences diverse endpoints in the cellular DNA damage response including cell-cycle checkpoint activation, recombinational repair and maintenance of genomic stability. Required for efficient homologous recombination-dependent repair of double-strand breaks (DSBs). In Xenopus laevis (African clawed frog), this protein is SOSS complex subunit C (inip).